The sequence spans 801 residues: Phenylalanine--tRNA ligase beta subunit (801 aa).

Positions 39-153 constitute a tRNA-binding domain; the sequence is AEGLSKLVVG…EDAVPGESIF (115 aa). A B5 domain is found at 406–481; sequence TDDIQVSTSL…RIYGYDKLPT (76 aa). Positions 459, 465, 468, and 469 each coordinate Mg(2+). The region spanning 708 to 801 is the FDX-ACB domain; the sequence is TKFPAVSRDI…LTEKVGAEVR (94 aa).

This sequence belongs to the phenylalanyl-tRNA synthetase beta subunit family. Type 1 subfamily. Tetramer of two alpha and two beta subunits. Mg(2+) is required as a cofactor.

The protein localises to the cytoplasm. It carries out the reaction tRNA(Phe) + L-phenylalanine + ATP = L-phenylalanyl-tRNA(Phe) + AMP + diphosphate + H(+). In Streptococcus mutans serotype c (strain ATCC 700610 / UA159), this protein is Phenylalanine--tRNA ligase beta subunit.